Consider the following 828-residue polypeptide: MTKRILNVAEKPSAAKEIAAILSNKRATVREGFSKYNKLWDFKYNILNFNDCEMTFTSVTGHLMEIDVVEQFKPWASCDPIQLFDAPIRKTVPSDKEPLKKTLEREIKKADILILWLDCDREGENIAFEVLEVCKNAKKKFEFYRAHFSAIIPREIDRACKNLAKPNEKDSIAVDTRMEIDLRIGAAFTRFQTLYLKKFKIISNSDNQPKTTTPANGNILNNSNNNSSGKEIISYGPCQFPTLGFVVERYFRIVNFKPEDFWHLSVVHEKMDTSSGKMIPVTFSWCRNRLFDYTAAFILYEKCLDNTEATVVDVTSKESRYRPVPLTTIELQKAASKKLRISSVQTMQYAEELYTKGLISYPRTETDSFQAGTDLKGLIGNQASNPEWGAYASRLINNNQFVYPKSGKNNDNSHPPIHPTSSATGLSGNLKKIYDFITRRFLACCSEESVFANTTVTIDIQGERFSETGTMVLKLGYLEVYPFDKRNDKLIPTYQKGERFTPKRIDLTKGTTVAPHYITEAELLTAMDNNKIGTDATMATHIQTIQDRFYVKKNESNQFVPSNLGVSLVASYELMGFEFSKPNLRAAIEADVDKISRGQKTKQEVLLSTIEKYKQLYQLANQNINCFDRSFREYYEPADPKGGEFRVLVSQFSRCGKCNGKMQYKSDQNPEAPKRILFCPQCIDTFDLPKNGDISQLVTSMGVPQNCPICQYQVLSVRNPINDKSYTICPKCRNSPPDPIHKKPFHCFQCTFNCNLATGNKQQQQQQQQQQQQTNYNRNNNNNNTNSARPITTRTTRTTTQHRTFTASNNNFNNNNRNSDRNNNNFIF.

Residues 4–149 (RILNVAEKPS…KFEFYRAHFS (146 aa)) enclose the Toprim domain. The Topo IA-type catalytic domain occupies 167-617 (NEKDSIAVDT…STIEKYKQLY (451 aa)). Tyrosine 361 functions as the O-(5'-phospho-DNA)-tyrosine intermediate in the catalytic mechanism. Residues 763–828 (QQQQQQQQQQ…SDRNNNNFIF (66 aa)) form a disordered region.

The protein belongs to the type IA topoisomerase family.

The catalysed reaction is ATP-independent breakage of single-stranded DNA, followed by passage and rejoining.. Releases the supercoiling and torsional tension of DNA introduced during the DNA replication and transcription by transiently cleaving and rejoining one strand of the DNA duplex. Introduces a single-strand break via transesterification at a target site in duplex DNA. The scissile phosphodiester is attacked by the catalytic tyrosine of the enzyme, resulting in the formation of a DNA-(5'-phosphotyrosyl)-enzyme intermediate and the expulsion of a 3'-OH DNA strand. The free DNA strand than undergoes passage around the unbroken strand thus removing DNA supercoils. Finally, in the religation step, the DNA 3'-OH attacks the covalent intermediate to expel the active-site tyrosine and restore the DNA phosphodiester backbone. The chain is DNA topoisomerase 3 (top3) from Dictyostelium discoideum (Social amoeba).